We begin with the raw amino-acid sequence, 264 residues long: Thymidylate synthase (264 aa).

R21 contacts dUMP. Residue H51 participates in (6R)-5,10-methylene-5,6,7,8-tetrahydrofolate binding. Residue 126 to 127 participates in dUMP binding; that stretch reads RR. The active-site Nucleophile is C146. Residues 166–169, N177, and 207–209 each bind dUMP; these read RSVD and HLY. A (6R)-5,10-methylene-5,6,7,8-tetrahydrofolate-binding site is contributed by D169. A263 lines the (6R)-5,10-methylene-5,6,7,8-tetrahydrofolate pocket.

It belongs to the thymidylate synthase family. Bacterial-type ThyA subfamily. Homodimer.

The protein resides in the cytoplasm. It catalyses the reaction dUMP + (6R)-5,10-methylene-5,6,7,8-tetrahydrofolate = 7,8-dihydrofolate + dTMP. It functions in the pathway pyrimidine metabolism; dTTP biosynthesis. Its function is as follows. Catalyzes the reductive methylation of 2'-deoxyuridine-5'-monophosphate (dUMP) to 2'-deoxythymidine-5'-monophosphate (dTMP) while utilizing 5,10-methylenetetrahydrofolate (mTHF) as the methyl donor and reductant in the reaction, yielding dihydrofolate (DHF) as a by-product. This enzymatic reaction provides an intracellular de novo source of dTMP, an essential precursor for DNA biosynthesis. The sequence is that of Thymidylate synthase from Geobacillus thermodenitrificans (strain NG80-2).